A 270-amino-acid polypeptide reads, in one-letter code: Carboxy-terminal domain RNA polymerase II polypeptide A small phosphatase 2 (270 aa).

Ser-5 bears the Phosphoserine mark. In terms of domain architecture, FCP1 homology spans 96–254 (QDQGRICVVI…LNLIPVFEEL (159 aa)). Asp-106 serves as the catalytic 4-aspartylphosphate intermediate. 3 residues coordinate Mg(2+): Asp-106, Asp-108, and Asn-217. Catalysis depends on Asp-108, which acts as the Proton donor.

Monomer. Interacts with REST. It depends on Mg(2+) as a cofactor. As to expression, expression is restricted to non-neuronal tissues.

Its subcellular location is the nucleus. The enzyme catalyses O-phospho-L-seryl-[protein] + H2O = L-seryl-[protein] + phosphate. It catalyses the reaction O-phospho-L-threonyl-[protein] + H2O = L-threonyl-[protein] + phosphate. Functionally, preferentially catalyzes the dephosphorylation of 'Ser-5' within the tandem 7 residue repeats in the C-terminal domain (CTD) of the largest RNA polymerase II subunit POLR2A. Negatively regulates RNA polymerase II transcription, possibly by controlling the transition from initiation/capping to processive transcript elongation. Recruited by REST to neuronal genes that contain RE-1 elements, leading to neuronal gene silencing in non-neuronal cells. This chain is Carboxy-terminal domain RNA polymerase II polypeptide A small phosphatase 2 (Ctdsp2), found in Mus musculus (Mouse).